Here is a 327-residue protein sequence, read N- to C-terminus: 4-hydroxyproline 2-epimerase (327 aa).

Catalysis depends on Cys-85, which acts as the Proton acceptor. Residues 86 to 87, His-205, and Asp-231 contribute to the substrate site; that span reads GH. The Proton donor role is filled by Cys-235. 236 to 237 is a substrate binding site; that stretch reads GT.

The protein belongs to the proline racemase family.

The catalysed reaction is trans-4-hydroxy-L-proline = cis-4-hydroxy-D-proline. Its function is as follows. Catalyzes the epimerization of trans-4-hydroxy-L-proline (t4LHyp) to cis-4-hydroxy-D-proline (c4DHyp). Displays no proline racemase activity. This chain is 4-hydroxyproline 2-epimerase, found in Roseibium alexandrii (strain DSM 17067 / NCIMB 14079 / DFL-11) (Labrenzia alexandrii).